The following is a 216-amino-acid chain: Cytidylate kinase (216 aa).

9–17 (GPAASGKGT) contributes to the ATP binding site.

Belongs to the cytidylate kinase family. Type 1 subfamily.

The protein localises to the cytoplasm. The enzyme catalyses CMP + ATP = CDP + ADP. The catalysed reaction is dCMP + ATP = dCDP + ADP. The polypeptide is Cytidylate kinase (Caulobacter sp. (strain K31)).